The sequence spans 134 residues: RxLR effector protein Avh238 (134 aa).

The first 21 residues, 1–21 (MRGVFFVAVAVAIFARSSAEA), serve as a signal peptide directing secretion. A RxLR-dEER motif is present at residues 44-68 (RFLRVADSEDDDLAAPADDGKTEER). Residues 50-72 (DSEDDDLAAPADDGKTEERAPKF) form a disordered region. The segment covering 61–70 (DDGKTEERAP) has biased composition (basic and acidic residues).

This sequence belongs to the RxLR effector family.

The protein resides in the secreted. Its subcellular location is the host cytoplasm. It is found in the host nucleus. Functionally, effector that, due to the lack of a histidine residue at position 79, is not able to induce cell death in tomato, tobacco, eggplant, potato, or in A.thaliana. The chain is RxLR effector protein Avh238 from Phytophthora sojae (Soybean stem and root rot agent).